The chain runs to 480 residues: Protein nucleotidyltransferase YdiU (480 aa).

Residues G87, G89, R90, K110, D122, G123, R173, and R180 each coordinate ATP. Catalysis depends on D245, which acts as the Proton acceptor. The Mg(2+) site is built by N246 and D255. D255 lines the ATP pocket.

Belongs to the SELO family. The cofactor is Mg(2+). Requires Mn(2+) as cofactor.

It catalyses the reaction L-seryl-[protein] + ATP = 3-O-(5'-adenylyl)-L-seryl-[protein] + diphosphate. The catalysed reaction is L-threonyl-[protein] + ATP = 3-O-(5'-adenylyl)-L-threonyl-[protein] + diphosphate. The enzyme catalyses L-tyrosyl-[protein] + ATP = O-(5'-adenylyl)-L-tyrosyl-[protein] + diphosphate. It carries out the reaction L-histidyl-[protein] + UTP = N(tele)-(5'-uridylyl)-L-histidyl-[protein] + diphosphate. It catalyses the reaction L-seryl-[protein] + UTP = O-(5'-uridylyl)-L-seryl-[protein] + diphosphate. The catalysed reaction is L-tyrosyl-[protein] + UTP = O-(5'-uridylyl)-L-tyrosyl-[protein] + diphosphate. Nucleotidyltransferase involved in the post-translational modification of proteins. It can catalyze the addition of adenosine monophosphate (AMP) or uridine monophosphate (UMP) to a protein, resulting in modifications known as AMPylation and UMPylation. This Jannaschia sp. (strain CCS1) protein is Protein nucleotidyltransferase YdiU.